The chain runs to 448 residues: Ribosomal protein uS12 methylthiotransferase RimO (448 aa).

Residues 16–126 (PKISFVSLGC…VVAAVHEAVP (111 aa)) form the MTTase N-terminal domain. Residues Cys-25, Cys-61, Cys-90, Cys-157, Cys-161, and Cys-164 each contribute to the [4Fe-4S] cluster site. The 238-residue stretch at 143–380 (LTPRHYAYLK…METQNGIALR (238 aa)) folds into the Radical SAM core domain. Residues 383–448 (RAKVGKRLPV…EAYDLYGSVA (66 aa)) form the TRAM domain.

This sequence belongs to the methylthiotransferase family. RimO subfamily. It depends on [4Fe-4S] cluster as a cofactor.

Its subcellular location is the cytoplasm. It catalyses the reaction L-aspartate(89)-[ribosomal protein uS12]-hydrogen + (sulfur carrier)-SH + AH2 + 2 S-adenosyl-L-methionine = 3-methylsulfanyl-L-aspartate(89)-[ribosomal protein uS12]-hydrogen + (sulfur carrier)-H + 5'-deoxyadenosine + L-methionine + A + S-adenosyl-L-homocysteine + 2 H(+). In terms of biological role, catalyzes the methylthiolation of an aspartic acid residue of ribosomal protein uS12. The chain is Ribosomal protein uS12 methylthiotransferase RimO from Methylobacterium radiotolerans (strain ATCC 27329 / DSM 1819 / JCM 2831 / NBRC 15690 / NCIMB 10815 / 0-1).